A 460-amino-acid polypeptide reads, in one-letter code: GTPase Der (460 aa).

2 EngA-type G domains span residues 4 to 174 and 184 to 361; these read PQVA…PRRE and PKIA…AERS. GTP-binding positions include 10 to 17, 57 to 61, 126 to 129, 190 to 197, 237 to 241, and 302 to 305; these read GRPNVGKS, DTGGL, NKAE, DTAGI, and NKWD. In terms of domain architecture, KH-like spans 362–446; that stretch reads RRIPTAELNQ…PIELVFRERE (85 aa).

It belongs to the TRAFAC class TrmE-Era-EngA-EngB-Septin-like GTPase superfamily. EngA (Der) GTPase family. In terms of assembly, associates with the 50S ribosomal subunit.

Functionally, GTPase that plays an essential role in the late steps of ribosome biogenesis. The chain is GTPase Der from Thermomicrobium roseum (strain ATCC 27502 / DSM 5159 / P-2).